The sequence spans 295 residues: MKHKYLIAVSGGPDSMALLNKKRHLVEAVCHVNYHDREDSDNDEKIVRDYCKKYNLKLFVFDTHKDDVSKYKDINNLQTWYREIRYDFFEKISQELGIKKILIAHQKNDFLESAYMSLNKNKKNLFLGIRRKSKFRSLILIRPLLNKTKKSLEQYCRSKNIEFVIDYTNFWDRYSRNVVRKMMAEWDKKTFQKFYLKVKWFNLKNMFFIKLLDSKFNNWIKQDFDINYFLKIKNNYKESLIYLFLNHIGIKPNENKIEQIIEFINKNKNGSVKKYRLKENQFIEIKNKKILYSIC.

S10–S15 contacts ATP.

Belongs to the tRNA(Ile)-lysidine synthase family.

The protein resides in the cytoplasm. The catalysed reaction is cytidine(34) in tRNA(Ile2) + L-lysine + ATP = lysidine(34) in tRNA(Ile2) + AMP + diphosphate + H(+). Its function is as follows. Ligates lysine onto the cytidine present at position 34 of the AUA codon-specific tRNA(Ile) that contains the anticodon CAU, in an ATP-dependent manner. Cytidine is converted to lysidine, thus changing the amino acid specificity of the tRNA from methionine to isoleucine. The chain is tRNA(Ile)-lysidine synthase from Malacoplasma penetrans (strain HF-2) (Mycoplasma penetrans).